Consider the following 145-residue polypeptide: 3-hydroxyacyl-[acyl-carrier-protein] dehydratase FabZ (145 aa).

The active site involves His51.

This sequence belongs to the thioester dehydratase family. FabZ subfamily.

It localises to the cytoplasm. The enzyme catalyses a (3R)-hydroxyacyl-[ACP] = a (2E)-enoyl-[ACP] + H2O. Its function is as follows. Involved in unsaturated fatty acids biosynthesis. Catalyzes the dehydration of short chain beta-hydroxyacyl-ACPs and long chain saturated and unsaturated beta-hydroxyacyl-ACPs. The chain is 3-hydroxyacyl-[acyl-carrier-protein] dehydratase FabZ from Staphylococcus saprophyticus subsp. saprophyticus (strain ATCC 15305 / DSM 20229 / NCIMB 8711 / NCTC 7292 / S-41).